We begin with the raw amino-acid sequence, 502 residues long: ATP synthase subunit alpha (502 aa).

The tract at residues 114 to 139 is disordered; that stretch reads PIDGRGPIETSKTRPIESPAPGVMDR. 169-176 contributes to the ATP binding site; the sequence is GDRQTGKT.

It belongs to the ATPase alpha/beta chains family. In terms of assembly, F-type ATPases have 2 components, CF(1) - the catalytic core - and CF(0) - the membrane proton channel. CF(1) has five subunits: alpha(3), beta(3), gamma(1), delta(1), epsilon(1). CF(0) has three main subunits: a(1), b(2) and c(9-12). The alpha and beta chains form an alternating ring which encloses part of the gamma chain. CF(1) is attached to CF(0) by a central stalk formed by the gamma and epsilon chains, while a peripheral stalk is formed by the delta and b chains.

The protein localises to the cell membrane. The catalysed reaction is ATP + H2O + 4 H(+)(in) = ADP + phosphate + 5 H(+)(out). Produces ATP from ADP in the presence of a proton gradient across the membrane. The alpha chain is a regulatory subunit. This is ATP synthase subunit alpha from Halalkalibacterium halodurans (strain ATCC BAA-125 / DSM 18197 / FERM 7344 / JCM 9153 / C-125) (Bacillus halodurans).